The primary structure comprises 246 residues: Acetoacetate decarboxylase (246 aa).

Lys116 (schiff-base intermediate with acetoacetate) is an active-site residue.

The protein belongs to the ADC family.

The catalysed reaction is acetoacetate + H(+) = acetone + CO2. In terms of biological role, catalyzes the conversion of acetoacetate to acetone and carbon dioxide. In Clostridium botulinum (strain Eklund 17B / Type B), this protein is Acetoacetate decarboxylase.